We begin with the raw amino-acid sequence, 328 residues long: Phosphoserine phosphatase (328 aa).

Asp113 functions as the Nucleophile in the catalytic mechanism. 2 residues coordinate Mg(2+): Asp113 and Asp115. Residue Asp115 is the Proton donor of the active site. Residues Glu122, Arg158, 201-202 (SG), and Lys246 each bind substrate. Asp269 serves as a coordination point for Mg(2+). Asn272 serves as a coordination point for substrate.

It belongs to the HAD-like hydrolase superfamily. SerB family. It depends on Mg(2+) as a cofactor.

It carries out the reaction O-phospho-L-serine + H2O = L-serine + phosphate. The catalysed reaction is O-phospho-D-serine + H2O = D-serine + phosphate. Its pathway is amino-acid biosynthesis; L-serine biosynthesis; L-serine from 3-phospho-D-glycerate: step 3/3. This is Phosphoserine phosphatase from Vibrio cholerae serotype O1 (strain ATCC 39315 / El Tor Inaba N16961).